The chain runs to 165 residues: Glycine cleavage system H protein, mitochondrial (165 aa).

The transit peptide at 1 to 31 (MALRIWASSTAKALRLSSASRPHFSPLFRCF) directs the protein to the mitochondrion. One can recognise a Lipoyl-binding domain in the interval 55–137 (VATIGITDHA…YEDGWMIKVK (83 aa)). K96 bears the N6-lipoyllysine mark.

The protein belongs to the GcvH family. As to quaternary structure, the glycine cleavage system is composed of four components that only loosely associate: the P protein (EC 1.4.4.2), the T protein (EC 2.1.2.10), the L protein (EC 1.8.1.4) and the lipoyl-bearing H protein. The cofactor is (R)-lipoate. Expressed in roots, stems and leaves.

The protein localises to the mitochondrion. Its function is as follows. The glycine cleavage system catalyzes the degradation of glycine. The H protein shuttles the methylamine group of glycine from the P protein to the T protein. The protein is Glycine cleavage system H protein, mitochondrial (GDCSH) of Flaveria trinervia (Clustered yellowtops).